A 321-amino-acid chain; its full sequence is MDLKFLDFEQPIAELEAKIEELRHVGFDNEINISEEISKLEEKSRKLTESVFSSLSAWQISQISRHPQRPHSRDYIDLIFQEFHELHGDRAFADDPAIIGGLARLDGAAVLVIGHQKGRDTKEKIHRNFGMPRPEGYRKALRLMRLAERFRLPIVCLIDTPGAYPGINAEERGQSEAIARNLFEMAQLQTPIVCVVIGEGGSGGALAIGVGDRLLMLQYSTYSVISPEGCASILWKSADKAELAAEAMGITSERLMELGLIDSIVPEPLGGAHRDRERMADNLKTELKRNLEELAALPMEELLAMRYERLMGYGVYEEPAT.

The CoA carboxyltransferase C-terminal domain maps to 39-293; the sequence is KLEEKSRKLT…KTELKRNLEE (255 aa).

It belongs to the AccA family. Acetyl-CoA carboxylase is a heterohexamer composed of biotin carboxyl carrier protein (AccB), biotin carboxylase (AccC) and two subunits each of ACCase subunit alpha (AccA) and ACCase subunit beta (AccD).

It localises to the cytoplasm. It catalyses the reaction N(6)-carboxybiotinyl-L-lysyl-[protein] + acetyl-CoA = N(6)-biotinyl-L-lysyl-[protein] + malonyl-CoA. It participates in lipid metabolism; malonyl-CoA biosynthesis; malonyl-CoA from acetyl-CoA: step 1/1. Functionally, component of the acetyl coenzyme A carboxylase (ACC) complex. First, biotin carboxylase catalyzes the carboxylation of biotin on its carrier protein (BCCP) and then the CO(2) group is transferred by the carboxyltransferase to acetyl-CoA to form malonyl-CoA. This is Acetyl-coenzyme A carboxylase carboxyl transferase subunit alpha from Methylococcus capsulatus (strain ATCC 33009 / NCIMB 11132 / Bath).